The following is a 318-amino-acid chain: L-lactate dehydrogenase (318 aa).

NAD(+)-binding positions include V17, D38, K43, Y69, and 83–84 (GA). 2 residues coordinate substrate: Q86 and R92. Residues S105, 122-124 (ATN), and S147 contribute to the NAD(+) site. 124-127 (NPVD) is a substrate binding site. Residue 152-155 (DTAR) participates in substrate binding. 2 residues coordinate beta-D-fructose 1,6-bisphosphate: K157 and H172. H179 (proton acceptor) is an active-site residue. The residue at position 223 (Y223) is a Phosphotyrosine. A substrate-binding site is contributed by T232.

This sequence belongs to the LDH/MDH superfamily. LDH family. Homotetramer.

It is found in the cytoplasm. It catalyses the reaction (S)-lactate + NAD(+) = pyruvate + NADH + H(+). It participates in fermentation; pyruvate fermentation to lactate; (S)-lactate from pyruvate: step 1/1. With respect to regulation, allosterically activated by fructose 1,6-bisphosphate (FBP). Its function is as follows. Catalyzes the conversion of lactate to pyruvate. The polypeptide is L-lactate dehydrogenase (Staphylococcus saprophyticus subsp. saprophyticus (strain ATCC 15305 / DSM 20229 / NCIMB 8711 / NCTC 7292 / S-41)).